The primary structure comprises 153 residues: ORM1-like protein 3 (153 aa).

The important for ceramide level-sensing stretch occupies residues 1-17; sequence MNVGTAHSEVNPNTRVM. At 1–21 the chain is on the cytoplasmic side; the sequence is MNVGTAHSEVNPNTRVMNSRG. Transmembrane regions (helical) follow at residues 22 to 42 and 43 to 63; these read IWLS…SIPF and VSVP…MYIF. Over 64–94 the chain is Cytoplasmic; sequence LHTVKGTPFETPDQGKARLLTHWEQMDYGVQ. Residues 95–117 form a helical membrane-spanning segment; it reads FTASRKFLTITPIVLYFLTSFYT. At 118-121 the chain is on the extracellular side; the sequence is KYDQ. The chain crosses the membrane as a helical span at residues 122–142; sequence IHFILNTVSLMSVLIPKLPQL. Pro137 carries the post-translational modification Hydroxyproline. The Cytoplasmic portion of the chain corresponds to 143 to 153; that stretch reads HGVRIFGINKY.

Belongs to the ORM family. As to quaternary structure, ceramide-sensitive subunit of the serine palmitoyltransferase (SPT) complex, which is also composed of SPTLC1, SPTLC2/3 and SPTSSA/B. Post-translationally, when hydroxylated at Pro-137, ubiquitinated via 'Lys-48'-linkage, leading to proteasomal degradation. In endothelial cells, ORMDL3 proteasomal degradation is controlled by the sphingosine 1-phosphate receptor signaling pathway.

Its subcellular location is the endoplasmic reticulum membrane. In terms of biological role, plays an essential role in the homeostatic regulation of sphingolipid de novo biosynthesis by modulating the activity of the serine palmitoyltransferase (SPT) in response to ceramide levels. When complexed to SPT, the binding of ceramides to its N-terminus stabilizes a conformation that block SPT substrate entry, hence preventing SPT catalytic activity. Through this mechanism, maintains ceramide levels at sufficient concentrations for the production of complex sphingolipids, but which prevents the accumulation of ceramides to levels that trigger apoptosis. The chain is ORM1-like protein 3 (ORMDL3) from Bos taurus (Bovine).